We begin with the raw amino-acid sequence, 197 residues long: Nucleoid occlusion factor SlmA (197 aa).

The 61-residue stretch at 7–67 (INRREHILQC…GLIEFIEESL (61 aa)) folds into the HTH tetR-type domain. A DNA-binding region (H-T-H motif) is located at residues 30 to 49 (TTAKLAAEVGVSEAALYRHF). A coiled-coil region spans residues 109–136 (DALLGENERLRSRISQLFAKIETHLKQI).

It belongs to the nucleoid occlusion factor SlmA family. Homodimer. Interacts with FtsZ.

It is found in the cytoplasm. Its subcellular location is the nucleoid. Its function is as follows. Required for nucleoid occlusion (NO) phenomenon, which prevents Z-ring formation and cell division over the nucleoid. Acts as a DNA-associated cell division inhibitor that binds simultaneously chromosomal DNA and FtsZ, and disrupts the assembly of FtsZ polymers. SlmA-DNA-binding sequences (SBS) are dispersed on non-Ter regions of the chromosome, preventing FtsZ polymerization at these regions. This is Nucleoid occlusion factor SlmA from Shewanella halifaxensis (strain HAW-EB4).